The following is a 150-amino-acid chain: Ribosome maturation factor RimP (150 aa).

The protein belongs to the RimP family.

It localises to the cytoplasm. Required for maturation of 30S ribosomal subunits. The protein is Ribosome maturation factor RimP of Thermotoga neapolitana (strain ATCC 49049 / DSM 4359 / NBRC 107923 / NS-E).